The chain runs to 496 residues: Angiopoietin-2 (496 aa).

Residues 1–18 (MWQIVFLTFGCDLVLASA) form the signal peptide. N-linked (GlcNAc...) asparagine glycosylation is found at Asn89, Asn119, Asn133, Asn151, Asn240, and Asn304. Residues 159 to 256 (QLLQHSISTN…QQHDLMETVN (98 aa)) are a coiled coil. The Fibrinogen C-terminal domain occupies 280-496 (TFRDCAEIFK…TTMMIRPADF (217 aa)). Cys284 and Cys313 are oxidised to a cystine. Residues Asp429, Asp431, Cys433, and Cys435 each contribute to the Ca(2+) site. Cystine bridges form between Cys433-Cys435 and Cys437-Cys450.

Interacts with TEK/TIE2, competing for the same binding site as ANGPT1. Interacts with ITGA5. Interacts with SVEP1/polydom. Interacts with THBD; this interaction significantly inhibits the generation of activated PC and TAFIa/CPB2 by the thrombin/thrombomodulin complex.

The protein resides in the secreted. Binds to TEK/TIE2, competing for the ANGPT1 binding site, and modulating ANGPT1 signaling. Can induce tyrosine phosphorylation of TEK/TIE2 in the absence of ANGPT1. In the absence of angiogenic inducers, such as VEGF, ANGPT2-mediated loosening of cell-matrix contacts may induce endothelial cell apoptosis with consequent vascular regression. In concert with VEGF, it may facilitate endothelial cell migration and proliferation, thus serving as a permissive angiogenic signal. Involved in the regulation of lymphangiogenesis. The protein is Angiopoietin-2 (Angpt2) of Rattus norvegicus (Rat).